We begin with the raw amino-acid sequence, 317 residues long: DNA-directed RNA polymerase subunit alpha 2 (317 aa).

Residues 1-227 (MALENLLHPT…NQLRNIVDIE (227 aa)) are alpha N-terminal domain (alpha-NTD). The interval 241-317 (INPILLKHVE…TLIENWPQDL (77 aa)) is alpha C-terminal domain (alpha-CTD).

This sequence belongs to the RNA polymerase alpha chain family. As to quaternary structure, homodimer. The RNAP catalytic core consists of 2 alpha, 1 beta, 1 beta' and 1 omega subunit. When a sigma factor is associated with the core the holoenzyme is formed, which can initiate transcription.

The enzyme catalyses RNA(n) + a ribonucleoside 5'-triphosphate = RNA(n+1) + diphosphate. Functionally, DNA-dependent RNA polymerase catalyzes the transcription of DNA into RNA using the four ribonucleoside triphosphates as substrates. The protein is DNA-directed RNA polymerase subunit alpha 2 of Francisella tularensis subsp. holarctica (strain LVS).